The primary structure comprises 274 residues: Exosome complex component Rrp42 (274 aa).

It belongs to the RNase PH family. Rrp42 subfamily. As to quaternary structure, component of the archaeal exosome complex. Forms a hexameric ring-like arrangement composed of 3 Rrp41-Rrp42 heterodimers. The hexameric ring associates with a trimer of Rrp4 and/or Csl4 subunits.

The protein localises to the cytoplasm. Its function is as follows. Non-catalytic component of the exosome, which is a complex involved in RNA degradation. Contributes to the structuring of the Rrp41 active site. The protein is Exosome complex component Rrp42 of Pyrococcus horikoshii (strain ATCC 700860 / DSM 12428 / JCM 9974 / NBRC 100139 / OT-3).